An 841-amino-acid chain; its full sequence is Replication origin-binding protein (841 aa).

The Helicase ATP-binding domain maps to 45–210; sequence PLYPRTRNVL…AIMRGEENIH (166 aa). 58–65 is an ATP binding site; sequence APMGSGKT.

The protein belongs to the herpesviridae OriBP family. In terms of assembly, homodimer. Interacts with the major DNA-binding protein. Interacts with the DNA helicase/primase complex-associated protein and the polymerase accessory protein.

It is found in the host nucleus. Functions as a docking protein to recruit essential components of the viral replication machinery to viral DNA origins. In the presence of the major DNA-binding protein, opens dsDNA leading to a conformational change in the origin that facilitates DNA unwinding and subsequent replication. The polypeptide is Replication origin-binding protein (MDV021) (Gallid herpesvirus 2 (strain Chicken/Md5/ATCC VR-987) (GaHV-2)).